The chain runs to 302 residues: UDP-N-acetylenolpyruvoylglucosamine reductase (302 aa).

Residues 23–188 enclose the FAD-binding PCMH-type domain; it reads KVGGNAEIFF…LKAVFKVNKG (166 aa). Arg168 is an active-site residue. Ser217 (proton donor) is an active-site residue. The active site involves Glu287.

This sequence belongs to the MurB family. FAD serves as cofactor.

The protein localises to the cytoplasm. The catalysed reaction is UDP-N-acetyl-alpha-D-muramate + NADP(+) = UDP-N-acetyl-3-O-(1-carboxyvinyl)-alpha-D-glucosamine + NADPH + H(+). The protein operates within cell wall biogenesis; peptidoglycan biosynthesis. Its function is as follows. Cell wall formation. The protein is UDP-N-acetylenolpyruvoylglucosamine reductase of Rickettsia bellii (strain RML369-C).